The following is a 1258-amino-acid chain: Structural polyprotein (1258 aa).

Positions 41 to 75 are host transcription inhibition; sequence PQAQQMQQLIAAVNTLAIRQNGTRTPGQQRRKRQP. The tract at residues 59 to 114 is disordered; the sequence is RQNGTRTPGQQRRKRQPNKPKRKQTPPKKQNPAKTKNKQKPQPPKPKKRKPGKRER. Positions 68–109 match the Nuclear localization signal motif; it reads QQRRKRQPNKPKRKQTPPKKQNPAKTKNKQKPQPPKPKKRKP. 2 stretches are compositionally biased toward basic residues: residues 69–84 and 93–114; these read QRRK…KQTP and TKNK…KRER. Positions 96 to 124 are binding to the viral RNA; it reads KQKPQPPKPKKRKPGKRERKCMKIENDCI. Positions 109–123 are ribosome-binding; it reads PGKRERKCMKIENDC. The cysteines at positions 123 and 138 are disulfide-linked. A Peptidase S3 domain is found at 123–271; the sequence is CIFEVKLEGK…RITPEGTEEW (149 aa). H149 acts as the Charge relay system in catalysis. The Nuclear export signal motif lies at 154 to 164; the sequence is IDNPDLAKLAF. The tract at residues 165–170 is interaction with spike glycoprotein E2; the sequence is KKSSKY. Residue D171 is the Charge relay system of the active site. Residues 193–203 are dimerization of the capsid protein; the sequence is PEGHYNWHHGA. S223 serves as the catalytic Charge relay system. Residues 229 to 233 form a dimerization of the capsid protein region; the sequence is DNKGR. The tract at residues 272-284 is functions as an uncleaved signal peptide for the precursor of protein E3/E2; that stretch reads TALVTTACILSNL. Cystine bridges form between C279–C288, C293–C297, C296–C328, C356–C462, C359–C365, C428–C442, C490–C601, C538–C562, and C540–C557. A glycan (N-linked (GlcNAc...) asparagine; by host) is linked at N283. Residues 338–696 are Extracellular-facing; that stretch reads GLTEDYKAYK…PHEIFSYYYG (359 aa). Interaction with host Mxra8 receptor regions lie at residues 363-366 and 399-401; these read QFCY and HSW. An interaction with host Mxra8 receptor region spans residues 521-524; the sequence is TGNK. A glycan (N-linked (GlcNAc...) asparagine; by host) is linked at N537. The interaction with host Mxra8 receptor stretch occupies residues 553 to 559; it reads EFDNCEV. N598 carries an N-linked (GlcNAc...) asparagine; by host glycan. The chain crosses the membrane as a helical span at residues 697–717; sequence LYPATTVAVCVGLACVILLAL. Residues 718–758 lie on the Cytoplasmic side of the membrane; it reads SASCCLCVSARNKCLTPYALTPGAVVPCTLSLLCCAPRAKA. The interval 726–730 is interaction with the capsid protein; it reads SARNK. S-palmitoyl cysteine; by host attachment occurs at residues C731, C751, and C752. Residues 731–751 form a transient transmembrane before p62-6K protein processing region; that stretch reads CLTPYALTPGAVVPCTLSLLC. A disulfide bridge links C731 with C752. Topologically, residues 759 to 773 are extracellular; it reads ATFAETAAYLWAENQ. Residues 774–794 form a helical membrane-spanning segment; that stretch reads TVFWMQFAIPVACFMIVTYCL. The Cytoplasmic portion of the chain corresponds to 795-796; the sequence is RH. Residues 797–817 form a helical membrane-spanning segment; sequence LMLCCRTASFLVAVSLGMGAT. Extracellular segments follow at residues 818 to 819 and 820 to 1234; these read QA and YEHS…HTMG. Disulfide bonds link C868–C933, C881–C913, C882–C915, and C887–C897. Residues 903-920 form an E1 fusion peptide loop region; it reads VYPFLWGGAYCFCDSENT. N960 and N1089 each carry an N-linked (GlcNAc...) asparagine; by host glycan. Intrachain disulfides connect C1078-C1090, C1120-C1195, C1125-C1199, and C1147-C1189. The helical transmembrane segment at 1235-1255 threads the bilayer; sequence GATVVIAIGITIFLIVTCIAF. Residue C1252 is the site of S-palmitoyl cysteine; by host attachment. At 1256 to 1258 the chain is on the cytoplasmic side; that stretch reads SRH.

Homodimer. Homomultimer. Interacts with host karyopherin KPNA4; this interaction allows the nuclear import of the viral capsid protein. Interacts with spike glycoprotein E2. Interacts with host IRAK1; the interaction leads to inhibition of IRAK1-dependent signaling. In terms of assembly, the precursor of protein E3/E2 and E1 form a heterodimer shortly after synthesis. As to quaternary structure, the precursor of protein E3/E2 and E1 form a heterodimer shortly after synthesis. Processing of the precursor of protein E3/E2 into E2 and E3 results in a heterodimer of the spike glycoproteins E2 and E1. Spike at virion surface are constituted of a trimer of E2-E1 heterodimers. After target cell attachment and endocytosis, E1 change conformation to form homotrimers. Interacts with 6K protein. Interacts with spike glycoprotein E1. Processing of the precursor of protein E3/E2 into E2 and E3 results in a heterodimer of the spike glycoproteins E2 and E1. Spike at virion surface are constituted of a trimer of E2-E1 heterodimers. Interacts with 6K protein. Interacts with host MXRA8; this interaction mediates virus entry. In terms of assembly, oligomer. Interacts with spike glycoprotein E1. Interacts with spike glycoprotein E2. Post-translationally, structural polyprotein: Specific enzymatic cleavages in vivo yield mature proteins. Capsid protein is auto-cleaved during polyprotein translation, unmasking a signal peptide at the N-terminus of the precursor of E3/E2. The remaining polyprotein is then targeted to the host endoplasmic reticulum, where host signal peptidase cleaves it into pE2, 6K and E1 proteins. pE2 is further processed to mature E3 and E2 by host furin in trans-Golgi vesicle. In terms of processing, palmitoylated via thioester bonds. These palmitoylations may induce disruption of the C-terminus transmembrane. This would result in the reorientation of E2 C-terminus from lumenal to cytoplasmic side. N-glycosylated. Post-translationally, palmitoylated via thioester bonds.

The protein resides in the virion. The protein localises to the host cytoplasm. It localises to the host cell membrane. Its subcellular location is the host nucleus. It is found in the virion membrane. The protein resides in the host Golgi apparatus. The protein localises to the host trans-Golgi network. It localises to the host endoplasmic reticulum. The catalysed reaction is Autocatalytic release of the core protein from the N-terminus of the togavirus structural polyprotein by hydrolysis of a -Trp-|-Ser- bond.. Forms an icosahedral capsid with a T=4 symmetry composed of 240 copies of the capsid protein surrounded by a lipid membrane through which penetrate 80 spikes composed of trimers of E1-E2 heterodimers. The capsid protein binds to the viral RNA genome at a site adjacent to a ribosome binding site for viral genome translation following genome release. Possesses a protease activity that results in its autocatalytic cleavage from the nascent structural protein. Following its self-cleavage, the capsid protein transiently associates with ribosomes, and within several minutes the protein binds to viral RNA and rapidly assembles into icosahedric core particles. The resulting nucleocapsid eventually associates with the cytoplasmic domain of the spike glycoprotein E2 at the cell membrane, leading to budding and formation of mature virions. In case of infection, new virions attach to target cells and after clathrin-mediated endocytosis their membrane fuses with the host endosomal membrane. This leads to the release of the nucleocapsid into the cytoplasm, followed by an uncoating event necessary for the genomic RNA to become accessible. The uncoating might be triggered by the interaction of capsid proteins with ribosomes. Binding of ribosomes would release the genomic RNA since the same region is genomic RNA-binding and ribosome-binding. Specifically inhibits interleukin-1 receptor-associated kinase 1/IRAK1-dependent signaling during viral entry, representing a means by which the alphaviruses may evade innate immune detection and activation prior to viral gene expression. In terms of biological role, provides the signal sequence for the translocation of the precursor of protein E3/E2 to the host endoplasmic reticulum. Furin-cleaved E3 remains associated with spike glycoprotein E1 and mediates pH protection of the latter during the transport via the secretory pathway. After virion release from the host cell, the assembly protein E3 is gradually released in the extracellular space. Its function is as follows. Plays a role in viral attachment to target host cell, by binding to the cell receptor MXRA8. Synthesized as a p62 precursor which is processed by furin at the cell membrane just before virion budding, giving rise to E2-E1 heterodimer. The p62-E1 heterodimer is stable, whereas E2-E1 is unstable and dissociate at low pH. p62 is processed at the last step, presumably to avoid E1 fusion activation before its final export to cell surface. E2 C-terminus contains a transitory transmembrane that would be disrupted by palmitoylation, resulting in reorientation of the C-terminal tail from lumenal to cytoplasmic side. This step is critical since E2 C-terminus is involved in budding by interacting with capsid proteins. This release of E2 C-terminus in cytoplasm occurs lately in protein export, and precludes premature assembly of particles at the endoplasmic reticulum membrane. Functionally, acts as a viroporin that participates in virus glycoprotein processing and transport to the plasma membrane, cell permeabilization and budding of viral particles. Disrupts the calcium homeostasis of the cell, probably at the endoplasmic reticulum level. This leads to cytoplasmic calcium elevation. Because of its lipophilic properties, the 6K protein is postulated to influence the selection of lipids that interact with the transmembrane domains of the glycoproteins, which, in turn, affects the deformability of the bilayer required for the extreme curvature that occurs as budding proceeds. Present in low amount in virions, about 3% compared to viral glycoproteins. Class II viral fusion protein. Fusion activity is inactive as long as E1 is bound to E2 in mature virion. After virus attachment to target cell and endocytosis, acidification of the endosome induce dissociation of E1/E2 heterodimer and concomitant trimerization of the E1 subunits. This E1 trimer is fusion active, and promotes release of viral nucleocapsid in cytoplasm after endosome and viral membrane fusion. Efficient fusion requires the presence of cholesterol and sphingolipid in the target membrane. This is Structural polyprotein from Middelburg virus.